The chain runs to 700 residues: Elongation factor G (700 aa).

The tr-type G domain occupies 8 to 290; the sequence is ERYRNIGISA…AVIDYLPSPV (283 aa). GTP-binding positions include 17–24, 88–92, and 142–145; these read AHIDAGKT, DTPGH, and NKMD.

Belongs to the TRAFAC class translation factor GTPase superfamily. Classic translation factor GTPase family. EF-G/EF-2 subfamily.

It localises to the cytoplasm. In terms of biological role, catalyzes the GTP-dependent ribosomal translocation step during translation elongation. During this step, the ribosome changes from the pre-translocational (PRE) to the post-translocational (POST) state as the newly formed A-site-bound peptidyl-tRNA and P-site-bound deacylated tRNA move to the P and E sites, respectively. Catalyzes the coordinated movement of the two tRNA molecules, the mRNA and conformational changes in the ribosome. The sequence is that of Elongation factor G from Leptothrix cholodnii (strain ATCC 51168 / LMG 8142 / SP-6) (Leptothrix discophora (strain SP-6)).